Consider the following 41-residue polypeptide: Large ribosomal subunit protein bL36 (41 aa).

The protein belongs to the bacterial ribosomal protein bL36 family.

This Nitrobacter hamburgensis (strain DSM 10229 / NCIMB 13809 / X14) protein is Large ribosomal subunit protein bL36.